The primary structure comprises 141 residues: Large ribosomal subunit protein uL11 (141 aa).

Belongs to the universal ribosomal protein uL11 family. Part of the ribosomal stalk of the 50S ribosomal subunit. Interacts with L10 and the large rRNA to form the base of the stalk. L10 forms an elongated spine to which L12 dimers bind in a sequential fashion forming a multimeric L10(L12)X complex. One or more lysine residues are methylated.

Functionally, forms part of the ribosomal stalk which helps the ribosome interact with GTP-bound translation factors. The sequence is that of Large ribosomal subunit protein uL11 from Aliarcobacter butzleri (strain RM4018) (Arcobacter butzleri).